The primary structure comprises 475 residues: Probable proline--tRNA ligase, mitochondrial (475 aa).

Residues 1 to 29 constitute a mitochondrion transit peptide; it reads MEGLLTRCRALPALATCSRQLSGYVPCRF.

The protein belongs to the class-II aminoacyl-tRNA synthetase family.

The protein resides in the mitochondrion matrix. The enzyme catalyses tRNA(Pro) + L-proline + ATP = L-prolyl-tRNA(Pro) + AMP + diphosphate. Its function is as follows. Mitochondrial aminoacyl-tRNA synthetase that catalyzes the specific attachment of the proline amino acid (aa) to the homologous transfer RNA (tRNA), further participating in protein synthesis. The reaction occurs in a two steps: proline is first activated by ATP to form Pro-AMP and then transferred to the acceptor end of tRNA(Pro). This Homo sapiens (Human) protein is Probable proline--tRNA ligase, mitochondrial.